A 1185-amino-acid chain; its full sequence is MERSALQWVGAPCGSHGPYVFYRAFRFQRRGGGRARVLSLGDFFFVRCRAEEPACIAELQLLWEERTSRQLLSSAKLYFLPEDTPQGRTSDHGEDEVIAVSEKVTVKLEDLAKWAQSDFSKWKCGFRAEPVKPMDVGKNGQKEALMRYRQSTLNSGLNFKDILKEKADLGEDDEDSNLLILSYPQYCRYRSMLKRIQDKPSSILTDQFVLALGGIAVTSKNPQIFYCRDTFDHPTLIENESICDEFAPNLKGRPRKKKPCPQRRDSLNGIKDSNNNSESKAVAKVKCEAKSALPKPKSNNSNCKKGSSEDKSKIAVGEECRADEQAFLVALYKYMKERKTPIERIPYLGFKQINLWTMFQAAQKLGGYETITARRQWKHIYDELGGNPGSTSAATCTRRHYERLILPYERFIKGEEDKPLPPVKPRKQDNSSQEGEAKTKVSGTKRIKNENQKSKKEKDNAQKPQDASEVSSEQEKDQESADQKNFTEHPTAGETKQPNQGPPPLLPEAARPLPMEKIDVTENSSSSEKAKEEVPHLSSFPSLSMPPDEDTVLDATVTKRLHSSADTQEDTKPERRIHKAFTESLENEPPEMPFSTFPVQLPTQSDMEDDKLPEMADYIANCTVKVDQLGNEDIHNALKQTPKVLVVQNFDMFKEKELPGSMSDDSTFGYTPLLYSKGNPGIMSPLAKKKLLSQVSGAALSCSYPYGSPPPLISKKKLNSRDELSSSLSQGPHVPNSDPIAINRPSVIQHVQSFKSKEERKSINDVFKHDMLSKVDPQRCDFSQHCLSSLAESYVPKTDIQDCKDKMTEKRALQHSRVPTFLADFYSSPHLHNLFRHTEHHLNNEQTSKYLPRDMFRESENISTFTQHKHQEKLNLNYHPSLHQQEKKATVEASSDDQPTDLSLPKSIHKQTAKAPGPGLSHSSMAQQEGKGVSLFQAASSQAVSLDCNPKACRVSPMAMTAPKKHSELLHRSGKQQAQRLENLRKMEGMVHPIISRRMSPQNIGAARPLKRGLEELDKVISEKKVRAVSPLHLPKETSVKEKVPDAEGEGSKSLHGLHSGSVLESHKFPLSAPIFPGLYPGTLCTGLNNRLPPGYSHPLQYLKNQTVLSPLMQPLALHSLMVQRQFLTSPANSQQLYRHLATATPVGSSYGDLLHNSIYPLAAINPQAAFPPSQLSSVHPSTKL.

Disordered stretches follow at residues 248–281, 413–550, 713–742, 883–932, and 1033–1058; these read PNLK…ESKA, KGEE…PDED, ISKK…PIAI, HQQE…EGKG, and HLPK…LHGL. Over residues 252–261 the composition is skewed to basic residues; sequence GRPRKKKPCP. Positions 321–413 constitute an ARID domain; sequence RADEQAFLVA…LILPYERFIK (93 aa). Basic and acidic residues predominate over residues 447-461; sequence IKNENQKSKKEKDNA. Residues 462-471 are compositionally biased toward polar residues; that stretch reads QKPQDASEVS. Residues 473–487 are compositionally biased toward basic and acidic residues; the sequence is EQEKDQESADQKNFT. The segment covering 1034 to 1053 has biased composition (basic and acidic residues); the sequence is LPKETSVKEKVPDAEGEGSK.

Belongs to the ARID5B family.

It localises to the nucleus. Its function is as follows. Transcription coactivator that binds to the 5'-AATA[CT]-3' core sequence and plays a key role in adipogenesis and liver development. Required for adipogenesis: regulates triglyceride metabolism in adipocytes by regulating expression of adipogenic genes. In Gallus gallus (Chicken), this protein is AT-rich interactive domain-containing protein 5B (ARID5B).